The following is a 462-amino-acid chain: MQRNNRLRNLFTVPVIMARQLKRNALSAGLAFAGNATSNEFDEHLQNEVEREREIQKKKKIKRTQSKKSPDLINKSTFQSRTIGSKKEKHRQLDPEYEIVIDGPLRKIKPYHFTYRTFCKERWRDKKLVDVFISEFRDRESEYYKRTIENGDVHINDETADLSTVIRNGDLITHQVHRHEPPVTSRPIKVIFEDDNIMVIDKPSGIPVHPTGRYRFNTITKMLQNNLGFVVNPCNRLDRLTSGLMFLAKTPKGADNIGDQLKAREVTKEYVAKVVGEFPETEVIVEKPLKLIEPRLALNAVCQMDEKGAKHAKTVFNRISYDGKTSIVKCKPLTGRSHQIRVHLQYLGHPIANDPIYSNDEVWGNNLGKGGQADFDIVITKLDEIGKRKPAKSWFHSNGGYGEVLRQEKCSICESDLYTDPGPNDLDLWLHAYLYESTETEEGTEKKKWCYKTEYPEWALRR.

The transit peptide at 1–24 (MQRNNRLRNLFTVPVIMARQLKRN) directs the protein to the mitochondrion. The S4 RNA-binding domain occupies 127 to 188 (KLVDVFISEF…HEPPVTSRPI (62 aa)). Residue D238 is part of the active site.

It belongs to the pseudouridine synthase RluA family.

Its subcellular location is the mitochondrion. It carries out the reaction uridine(32) in tRNA = pseudouridine(32) in tRNA. In terms of biological role, responsible for synthesis of pseudouridine from uracil-32 in mitochondrial transfer RNAs. The chain is tRNA pseudouridine(32) synthase, mitochondrial (PUS9) from Saccharomyces cerevisiae (strain ATCC 204508 / S288c) (Baker's yeast).